The sequence spans 331 residues: Lipoyl synthase (331 aa).

The tract at residues 1–33 is disordered; sequence MSDALIATSSEAPQSPAEQYDPTRKQKSADKTA. The segment covering 7 to 17 has biased composition (polar residues); sequence ATSSEAPQSPA. Residues 21–33 show a composition bias toward basic and acidic residues; it reads DPTRKQKSADKTA. Positions 78, 83, 89, 104, 108, 111, and 318 each coordinate [4Fe-4S] cluster. The Radical SAM core domain maps to 89-307; it reads CFGKGTATFM…EEEAYKMGFT (219 aa).

The protein belongs to the radical SAM superfamily. Lipoyl synthase family. It depends on [4Fe-4S] cluster as a cofactor.

The protein localises to the cytoplasm. The enzyme catalyses [[Fe-S] cluster scaffold protein carrying a second [4Fe-4S](2+) cluster] + N(6)-octanoyl-L-lysyl-[protein] + 2 oxidized [2Fe-2S]-[ferredoxin] + 2 S-adenosyl-L-methionine + 4 H(+) = [[Fe-S] cluster scaffold protein] + N(6)-[(R)-dihydrolipoyl]-L-lysyl-[protein] + 4 Fe(3+) + 2 hydrogen sulfide + 2 5'-deoxyadenosine + 2 L-methionine + 2 reduced [2Fe-2S]-[ferredoxin]. Its pathway is protein modification; protein lipoylation via endogenous pathway; protein N(6)-(lipoyl)lysine from octanoyl-[acyl-carrier-protein]: step 2/2. In terms of biological role, catalyzes the radical-mediated insertion of two sulfur atoms into the C-6 and C-8 positions of the octanoyl moiety bound to the lipoyl domains of lipoate-dependent enzymes, thereby converting the octanoylated domains into lipoylated derivatives. The chain is Lipoyl synthase from Cupriavidus necator (strain ATCC 17699 / DSM 428 / KCTC 22496 / NCIMB 10442 / H16 / Stanier 337) (Ralstonia eutropha).